Here is a 430-residue protein sequence, read N- to C-terminus: Enolase (430 aa).

Glutamine 165 is a (2R)-2-phosphoglycerate binding site. The active-site Proton donor is the glutamate 207. Positions 244, 287, and 314 each coordinate Mg(2+). Lysine 339, arginine 368, serine 369, and lysine 390 together coordinate (2R)-2-phosphoglycerate. The active-site Proton acceptor is lysine 339.

The protein belongs to the enolase family. Component of the RNA degradosome, a multiprotein complex involved in RNA processing and mRNA degradation. The cofactor is Mg(2+).

The protein localises to the cytoplasm. It localises to the secreted. Its subcellular location is the cell surface. The catalysed reaction is (2R)-2-phosphoglycerate = phosphoenolpyruvate + H2O. The protein operates within carbohydrate degradation; glycolysis; pyruvate from D-glyceraldehyde 3-phosphate: step 4/5. Functionally, catalyzes the reversible conversion of 2-phosphoglycerate (2-PG) into phosphoenolpyruvate (PEP). It is essential for the degradation of carbohydrates via glycolysis. The polypeptide is Enolase (Xylella fastidiosa (strain M23)).